Reading from the N-terminus, the 33-residue chain is Dermaseptin-4 (33 aa).

Leucine 33 carries the post-translational modification Leucine amide.

In terms of tissue distribution, expressed by the skin glands.

The protein localises to the secreted. Its function is as follows. Has antiparasitic activity against trypomastigote form of T.cruzi (IC(50)=0.25 uM) in vitro but not against L.infantum. Probably acts by permeabilizing cell membranes. In vitro, shows no cytotoxicity against macrophages. Has antibacterial activity. The sequence is that of Dermaseptin-4 from Pithecopus nordestinus (Northeastern Brazilian leaf frog).